We begin with the raw amino-acid sequence, 235 residues long: Calcium-activated potassium channel subunit beta-2 (235 aa).

The segment at 1–45 (MFIWTSGRTSSSYRHDEKRNIYQKIRDHDLLDKRKTVTALKAGED) is ball and chain. The Cytoplasmic segment spans residues 1 to 46 (MFIWTSGRTSSSYRHDEKRNIYQKIRDHDLLDKRKTVTALKAGEDR). Residues 47 to 67 (AILLGLAMMVCSIMMYFLLGI) form a helical membrane-spanning segment. The Extracellular segment spans residues 68 to 194 (TLLRSYMQSV…VILTKLYSSN (127 aa)). Residues asparagine 88, asparagine 96, and asparagine 119 are each glycosylated (N-linked (GlcNAc...) asparagine). Residues 195-215 (VLFHSLFWPTCMMAGGVAIVA) form a helical membrane-spanning segment. Topologically, residues 216-235 (MVKLTQYLSLLCERIQRINR) are cytoplasmic.

It belongs to the KCNMB (TC 8.A.14.1) family. KCNMB2 subfamily. As to quaternary structure, interacts with KCNMA1 tetramer. There are probably 4 molecules of KCMNB2 per KCNMA1 tetramer. In terms of processing, N-glycosylated. In terms of tissue distribution, expressed in kidney, heart and brain. Highly expressed in ovary. Expressed at low level in other tissues.

It localises to the membrane. Functionally, regulatory subunit of the calcium activated potassium KCNMA1 (maxiK) channel. Modulates the calcium sensitivity and gating kinetics of KCNMA1, thereby contributing to KCNMA1 channel diversity. Acts as a negative regulator that confers rapid and complete inactivation of KCNMA1 channel complex. May participate in KCNMA1 inactivation in chromaffin cells of the adrenal gland or in hippocampal CA1 neurons. This chain is Calcium-activated potassium channel subunit beta-2 (KCNMB2), found in Homo sapiens (Human).